An 84-amino-acid chain; its full sequence is Small ribosomal subunit protein bS16 (84 aa).

Belongs to the bacterial ribosomal protein bS16 family.

The protein is Small ribosomal subunit protein bS16 of Desulforapulum autotrophicum (strain ATCC 43914 / DSM 3382 / VKM B-1955 / HRM2) (Desulfobacterium autotrophicum).